The following is a 200-amino-acid chain: Protein GrpE (200 aa).

It belongs to the GrpE family. Homodimer.

The protein localises to the cytoplasm. In terms of biological role, participates actively in the response to hyperosmotic and heat shock by preventing the aggregation of stress-denatured proteins, in association with DnaK and GrpE. It is the nucleotide exchange factor for DnaK and may function as a thermosensor. Unfolded proteins bind initially to DnaJ; upon interaction with the DnaJ-bound protein, DnaK hydrolyzes its bound ATP, resulting in the formation of a stable complex. GrpE releases ADP from DnaK; ATP binding to DnaK triggers the release of the substrate protein, thus completing the reaction cycle. Several rounds of ATP-dependent interactions between DnaJ, DnaK and GrpE are required for fully efficient folding. The chain is Protein GrpE from Geobacter sulfurreducens (strain ATCC 51573 / DSM 12127 / PCA).